We begin with the raw amino-acid sequence, 506 residues long: TOM1-like protein 3 (506 aa).

In terms of domain architecture, VHS spans 12-141; the sequence is ATNDMLIGPD…ELRSAGIEFP (130 aa). The 89-residue stretch at 180 to 268 folds into the GAT domain; sequence DASALSMEEI…VLQHHDDKAK (89 aa). Disordered stretches follow at residues 266 to 328, 351 to 384, and 398 to 477; these read KAKG…PPSS, ETFE…SKSP, and EQLP…PEDI. Acidic residues predominate over residues 288–298; that stretch reads DDDDDESDDDF. Serine 294 is modified (phosphoserine). A compositionally biased stretch (polar residues) spans 358 to 368; sequence PPSTSQSSNHD. Phosphoserine is present on serine 383. Residues 450-460 are compositionally biased toward polar residues; sequence QSRNLSLNPTA. Over residues 468 to 477 the composition is skewed to basic and acidic residues; that stretch reads PKKDDKPEDI.

This sequence belongs to the TOM1 family. In terms of tissue distribution, preferentially expressed in cauline leaves.

It localises to the membrane. Its function is as follows. Might contribute to the loading of the ESCRT machinery. The polypeptide is TOM1-like protein 3 (Arabidopsis thaliana (Mouse-ear cress)).